Consider the following 115-residue polypeptide: MKKKHRIKKNDEFQTVFQKGKSTANRQFVVYQLDKEEQPNFRIGLSVSKKIGNAVVRNRIKRMIRQSITELKDEIDSGKDFVIIARKPCAEMTYEELKKSLIHVFKRSGMKRIKK.

The protein belongs to the RnpA family. As to quaternary structure, consists of a catalytic RNA component (M1 or rnpB) and a protein subunit.

It carries out the reaction Endonucleolytic cleavage of RNA, removing 5'-extranucleotides from tRNA precursor.. Its function is as follows. RNaseP catalyzes the removal of the 5'-leader sequence from pre-tRNA to produce the mature 5'-terminus. It can also cleave other RNA substrates such as 4.5S RNA. The protein component plays an auxiliary but essential role in vivo by binding to the 5'-leader sequence and broadening the substrate specificity of the ribozyme. The polypeptide is Ribonuclease P protein component (Bacillus cereus (strain AH187)).